Consider the following 415-residue polypeptide: Serine hydroxymethyltransferase (415 aa).

Residues L117 and 121-123 (GHL) each bind (6S)-5,6,7,8-tetrahydrofolate. K226 bears the N6-(pyridoxal phosphate)lysine mark. (6S)-5,6,7,8-tetrahydrofolate is bound by residues E241 and 349 to 351 (SPF).

It belongs to the SHMT family. In terms of assembly, homodimer. Requires pyridoxal 5'-phosphate as cofactor.

It localises to the cytoplasm. The catalysed reaction is (6R)-5,10-methylene-5,6,7,8-tetrahydrofolate + glycine + H2O = (6S)-5,6,7,8-tetrahydrofolate + L-serine. Its pathway is one-carbon metabolism; tetrahydrofolate interconversion. The protein operates within amino-acid biosynthesis; glycine biosynthesis; glycine from L-serine: step 1/1. Its function is as follows. Catalyzes the reversible interconversion of serine and glycine with tetrahydrofolate (THF) serving as the one-carbon carrier. This reaction serves as the major source of one-carbon groups required for the biosynthesis of purines, thymidylate, methionine, and other important biomolecules. Also exhibits THF-independent aldolase activity toward beta-hydroxyamino acids, producing glycine and aldehydes, via a retro-aldol mechanism. The sequence is that of Serine hydroxymethyltransferase from Geobacter metallireducens (strain ATCC 53774 / DSM 7210 / GS-15).